Consider the following 299-residue polypeptide: 4-hydroxybenzoate octaprenyltransferase (299 aa).

The next 7 membrane-spanning stretches (helical) occupy residues 31 to 51 (IGIYLVLWPTLWSLWIAADGL), 54 to 74 (WDVLVIFVLGVVLMRSAGCVI), 105 to 125 (VLFFVALLVIAFILVLFTNPL), 148 to 168 (QLPQIVLGAAFAWSIPMAFAA), 177 to 197 (IWVLYTAVVLWTVAYDTFYAM), 241 to 261 (FGLGFSFKVSLLVAGGLFAYQ), and 277 to 297 (FLHNNWVGLVVFLGILVDKLI).

Belongs to the UbiA prenyltransferase family. It depends on Mg(2+) as a cofactor.

It localises to the cell inner membrane. It carries out the reaction all-trans-octaprenyl diphosphate + 4-hydroxybenzoate = 4-hydroxy-3-(all-trans-octaprenyl)benzoate + diphosphate. The protein operates within cofactor biosynthesis; ubiquinone biosynthesis. Its function is as follows. Catalyzes the prenylation of para-hydroxybenzoate (PHB) with an all-trans polyprenyl group. Mediates the second step in the final reaction sequence of ubiquinone-8 (UQ-8) biosynthesis, which is the condensation of the polyisoprenoid side chain with PHB, generating the first membrane-bound Q intermediate 3-octaprenyl-4-hydroxybenzoate. In Saccharophagus degradans (strain 2-40 / ATCC 43961 / DSM 17024), this protein is 4-hydroxybenzoate octaprenyltransferase.